Consider the following 97-residue polypeptide: Large ribosomal subunit protein bL28 (97 aa).

It belongs to the bacterial ribosomal protein bL28 family.

This chain is Large ribosomal subunit protein bL28, found in Bartonella henselae (strain ATCC 49882 / DSM 28221 / CCUG 30454 / Houston 1) (Rochalimaea henselae).